Consider the following 275-residue polypeptide: Bis(5'-nucleosyl)-tetraphosphatase, symmetrical (275 aa).

This sequence belongs to the Ap4A hydrolase family.

It carries out the reaction P(1),P(4)-bis(5'-adenosyl) tetraphosphate + H2O = 2 ADP + 2 H(+). Its function is as follows. Hydrolyzes diadenosine 5',5'''-P1,P4-tetraphosphate to yield ADP. In Photorhabdus laumondii subsp. laumondii (strain DSM 15139 / CIP 105565 / TT01) (Photorhabdus luminescens subsp. laumondii), this protein is Bis(5'-nucleosyl)-tetraphosphatase, symmetrical.